The following is a 343-amino-acid chain: Heat-inducible transcription repressor HrcA (343 aa).

The protein belongs to the HrcA family.

Negative regulator of class I heat shock genes (grpE-dnaK-dnaJ and groELS operons). Prevents heat-shock induction of these operons. The protein is Heat-inducible transcription repressor HrcA of Bacillus pumilus (strain SAFR-032).